Consider the following 220-residue polypeptide: ATP synthase subunit 5, mitochondrial (220 aa).

Belongs to the ATPase delta chain family. F-type ATPases have 2 components, CF(1) - the catalytic core - and CF(0) - the membrane proton channel. CF(1) has five subunits: alpha(3), beta(3), gamma(1), delta(1), epsilon(1). CF(0) has three main subunits: a, b and c.

The protein localises to the mitochondrion. It is found in the mitochondrion inner membrane. Functionally, mitochondrial membrane ATP synthase (F(1)F(0) ATP synthase or Complex V) produces ATP from ADP in the presence of a proton gradient across the membrane which is generated by electron transport complexes of the respiratory chain. F-type ATPases consist of two structural domains, F(1) - containing the extramembraneous catalytic core and F(0) - containing the membrane proton channel, linked together by a central stalk and a peripheral stalk. During catalysis, ATP synthesis in the catalytic domain of F(1) is coupled via a rotary mechanism of the central stalk subunits to proton translocation. Part of the complex F(0) domain and the peripheric stalk, which acts as a stator to hold the catalytic alpha(3)beta(3) subcomplex and subunit a/ATP6 static relative to the rotary elements. This chain is ATP synthase subunit 5, mitochondrial (atp-5), found in Neurospora crassa (strain ATCC 24698 / 74-OR23-1A / CBS 708.71 / DSM 1257 / FGSC 987).